We begin with the raw amino-acid sequence, 39 residues long: Photosystem II reaction center protein Y (39 aa).

A helical transmembrane segment spans residues 7-25; the sequence is VLVVLLPVLLAGGWALKNI.

The protein belongs to the PsbY family. As to quaternary structure, PSII is composed of 1 copy each of membrane proteins PsbA, PsbB, PsbC, PsbD, PsbE, PsbF, PsbH, PsbI, PsbJ, PsbK, PsbL, PsbM, PsbT, PsbX, PsbY, PsbZ, Psb30/Ycf12, peripheral proteins PsbO, CyanoQ (PsbQ), PsbU, PsbV and a large number of cofactors. It forms dimeric complexes.

The protein resides in the cellular thylakoid membrane. In terms of biological role, loosely associated component of the core of photosystem II (PSII), it is not always seen in crystals. PSII is a light-driven water plastoquinone oxidoreductase, using light energy to abstract electrons from H(2)O, generating a proton gradient subsequently used for ATP formation. The polypeptide is Photosystem II reaction center protein Y (Cyanothece sp. (strain PCC 7425 / ATCC 29141)).